A 37-amino-acid chain; its full sequence is Large ribosomal subunit protein bL36 (37 aa).

The protein belongs to the bacterial ribosomal protein bL36 family.

The protein is Large ribosomal subunit protein bL36 of Gloeobacter violaceus (strain ATCC 29082 / PCC 7421).